A 260-amino-acid polypeptide reads, in one-letter code: Ubiquinone/menaquinone biosynthesis C-methyltransferase UbiE (260 aa).

S-adenosyl-L-methionine-binding positions include T83, D104, 132–133, and S149; that span reads NA.

The protein belongs to the class I-like SAM-binding methyltransferase superfamily. MenG/UbiE family.

The catalysed reaction is a 2-demethylmenaquinol + S-adenosyl-L-methionine = a menaquinol + S-adenosyl-L-homocysteine + H(+). It catalyses the reaction a 2-methoxy-6-(all-trans-polyprenyl)benzene-1,4-diol + S-adenosyl-L-methionine = a 5-methoxy-2-methyl-3-(all-trans-polyprenyl)benzene-1,4-diol + S-adenosyl-L-homocysteine + H(+). Its pathway is quinol/quinone metabolism; menaquinone biosynthesis; menaquinol from 1,4-dihydroxy-2-naphthoate: step 2/2. It participates in cofactor biosynthesis; ubiquinone biosynthesis. Its function is as follows. Methyltransferase required for the conversion of demethylmenaquinol (DMKH2) to menaquinol (MKH2) and the conversion of 2-polyprenyl-6-methoxy-1,4-benzoquinol (DDMQH2) to 2-polyprenyl-3-methyl-6-methoxy-1,4-benzoquinol (DMQH2). This Vibrio cholerae serotype O1 (strain ATCC 39315 / El Tor Inaba N16961) protein is Ubiquinone/menaquinone biosynthesis C-methyltransferase UbiE.